Here is a 704-residue protein sequence, read N- to C-terminus: MVRKATKKTIKKVKQVEEFNDDDEIIEEIVEEIEEVVEQRDEVNDEFQEEEEELEDDDDDEDDEDEIVFTSIRTTATTTTPINQHNDKEKEKKKDKQEEYIDSDDDDDDDGDENYYLNNNNNNNNNINNNNNYNNNNYNNNNTPTEPIKTETIFYNPPIRKRNEINGTVNTVSGGKSSKNIIEKMGEQSWGDMYTPSKCLQISKQNCELQSKYYTEAQLERLSSEIRRNPSMASKSYHFLSLGLTTKINHQWIRALISMALLISLVAIIFYLPLPHLKHIIMSPTGPSIQTSKTTGEFDQFDFNNPSIATKLTAFKDNWRRFSIVGVSNFLCSNYNFNPIDYSDGGGDGGDGGNTSIPKEFSTVQELKNLKIFGSCILFGVILFVVWLFATRLAEKEIIIKSNLPLQFLHSILTLLVIPLLSMLFWSLVLLYFIQTLLIGNQVNGQEDIFYCVNHLSNSLSEISSFSPARELFLGSVGIVMRLVNYFYPLSIESLALHQSTLYDTKNVYQMKLVSFLWTIIVGSFIYHTFLISSYLYSIFHEYHPTTTTTTTTTINTTTNTTSNTSQQSNPLSKRLKSNQIDPSSFNLFSLDVKFLPSFIPEVLITQNFIIVFIWTIAASLLWIYGVPPNLHIHEGEIFFIFIALAPLIKSIYNLIIIEQKKDKINQVHNEISWKSEPEILELQRQRLEQDQLDQQQFDELIDN.

The interval 37–145 is disordered; it reads VEQRDEVNDE…NNYNNNNTPT (109 aa). The segment covering 43 to 67 has biased composition (acidic residues); sequence VNDEFQEEEEELEDDDDDEDDEDEI. Residues 85-99 show a composition bias toward basic and acidic residues; that stretch reads HNDKEKEKKKDKQEE. Residues 100 to 113 are compositionally biased toward acidic residues; the sequence is YIDSDDDDDDDGDE. Low complexity predominate over residues 114 to 142; it reads NYYLNNNNNNNNNINNNNNYNNNNYNNNN. The N-linked (GlcNAc...) asparagine glycan is linked to Asn166. A helical membrane pass occupies residues 255–275; sequence ALISMALLISLVAIIFYLPLP. Asn354 carries N-linked (GlcNAc...) asparagine glycosylation. Helical transmembrane passes span 370–390, 414–434, and 513–533; these read LKIF…WLFA, TLLV…LYFI, and LVSF…FLIS. Residues 550 to 565 are compositionally biased toward low complexity; the sequence is TTTTTINTTTNTTSNT. Residues 550–576 are disordered; the sequence is TTTTTINTTTNTTSNTSQQSNPLSKRL. Asn556, Asn560, and Asn564 each carry an N-linked (GlcNAc...) asparagine glycan. Residues 566 to 576 show a composition bias toward polar residues; it reads SQQSNPLSKRL. 2 helical membrane passes run 609 to 629 and 638 to 658; these read FIIV…GVPP and IFFI…LIII.

Its subcellular location is the membrane. This Dictyostelium discoideum (Social amoeba) protein is Transmembrane protein DDB_G0274347.